The primary structure comprises 298 residues: Inosose dehydratase (298 aa).

The protein belongs to the IolE/MocC family. Glutathione serves as cofactor. Requires Co(2+) as cofactor. It depends on Mn(2+) as a cofactor.

The catalysed reaction is scyllo-inosose = 3D-3,5/4-trihydroxycyclohexane-1,2-dione + H2O. It participates in polyol metabolism; myo-inositol degradation into acetyl-CoA; acetyl-CoA from myo-inositol: step 2/7. Catalyzes the dehydration of inosose (2-keto-myo-inositol, 2KMI or 2,4,6/3,5-pentahydroxycyclohexanone) to 3D-(3,5/4)-trihydroxycyclohexane-1,2-dione (D-2,3-diketo-4-deoxy-epi-inositol). In Clostridium botulinum (strain Eklund 17B / Type B), this protein is Inosose dehydratase.